The chain runs to 373 residues: Peroxisomal biogenesis factor 3 (373 aa).

The Cytoplasmic segment spans residues 1–15 (MLRSMWNFLKRHKKK). The interval 1-45 (MLRSMWNFLKRHKKKCIFLGTVLGGVYILGKYGQKKIREIQEREA) is targeting to peroxisomes. Residues 16 to 36 (CIFLGTVLGGVYILGKYGQKK) traverse the membrane as a helical segment. Topologically, residues 37-116 (IREIQEREAA…LKIISFTRSI (80 aa)) are peroxisomal. The helical transmembrane segment at 117–140 (VAVYSTCMLVVLLRVQLNIIGGYI) threads the bilayer. The segment at 120–136 (YSTCMLVVLLRVQLNII) is interaction with PEX19. Topologically, residues 141–373 (YLDNATVGKN…AFSTPQQLEK (233 aa)) are cytoplasmic.

This sequence belongs to the peroxin-3 family. In terms of assembly, interacts with PEX19.

The protein localises to the peroxisome membrane. In terms of biological role, involved in peroxisome biosynthesis and integrity. Assembles membrane vesicles before the matrix proteins are translocated. As a docking factor for PEX19, is necessary for the import of peroxisomal membrane proteins in the peroxisomes. The protein is Peroxisomal biogenesis factor 3 (PEX3) of Cricetulus longicaudatus (Long-tailed dwarf hamster).